The primary structure comprises 257 residues: Caspase-14 (257 aa).

Active-site residues include His-93 and Cys-136. Positions 156–167 (DEELGGDEVAVL) are excised as a propeptide.

It belongs to the peptidase C14A family. As to quaternary structure, heterodimer of a large and a small subunit, both processed from the precursor; the mature active form is a p17/p10 dimer and the intermediate form a p20/p8 dimer. Post-translationally, maturation by proteolytic processing appears to be a two-step process. The precursor is processed by KLK7 to yield the p20/p8 intermediate form which acts the precursor to yield the p17/p10 mature form. Initially it was reported that cleavage by granzyme B, caspase-8 and -10 generates the two active subunits, however the physiological relevance has not been established. As to expression, embryo, adult liver and less in adult brain and kidney. Expressed in differentiating keratinocytes of embryonic skin (at protein level). Expressed in keratinocytes of adult skin suprabasal layers (at protein level).

The protein localises to the cytoplasm. It is found in the nucleus. Its function is as follows. Non-apoptotic caspase which is involved in epidermal differentiation. Seems to play a role in keratinocyte differentiation and is required for cornification. Regulates maturation of the epidermis by proteolytically processing filaggrin. In vitro is equally active on the synthetic caspase substrates WEHD-ACF and IETD-AFC. Involved in processing of prosaposin in the epidermis. May be involved in retinal pigment epithelium cell barrier function. The sequence is that of Caspase-14 (Casp14) from Mus musculus (Mouse).